A 118-amino-acid chain; its full sequence is Basic phospholipase A2 nigexine (118 aa).

Disulfide bonds link Cys11-Cys70, Cys26-Cys117, Cys28-Cys44, Cys43-Cys98, Cys50-Cys91, Cys59-Cys84, and Cys77-Cys89. The Ca(2+) site is built by Tyr27, Gly29, and Gly31. His47 is a catalytic residue. Asp48 lines the Ca(2+) pocket. The short motif at 52–69 (EKAGKMGCWPYFTLYKYK) is the Coagulation factor Xa binding motif element. Residue Asp92 is part of the active site.

This sequence belongs to the phospholipase A2 family. Group I subfamily. D49 sub-subfamily. The cofactor is Ca(2+). As to expression, expressed by the venom gland.

It localises to the secreted. The enzyme catalyses a 1,2-diacyl-sn-glycero-3-phosphocholine + H2O = a 1-acyl-sn-glycero-3-phosphocholine + a fatty acid + H(+). Functionally, snake venom phospholipase A2 (PLA2) that shows anticoagulant activity, has cytotoxic activity and affects neuromuscular transmission in vitro. PLA2 catalyzes the calcium-dependent hydrolysis of the 2-acyl groups in 3-sn-phosphoglycerides. This chain is Basic phospholipase A2 nigexine, found in Naja pallida (Red spitting cobra).